A 632-amino-acid polypeptide reads, in one-letter code: Galactan 5-O-arabinofuranosyltransferase (632 aa).

The next 13 helical transmembrane spans lie at 10–30 (QIVL…IAIA), 45–65 (ALTT…GGVW), 76–96 (LGGL…PLGA), 162–182 (WAIT…WQMI), 184–204 (FEYA…YSSP), 206–226 (PYAA…WSGL), 242–259 (GWAT…AATW), 263–282 (LLAY…ATAL), 298–318 (LAGI…PFLA), 344–364 (FPML…LWLI), 375–395 (ALMI…LTTL), 409–429 (LTVL…QSLA), and 434–454 (AVLS…SQDI). The Extracellular portion of the chain corresponds to 455 to 632 (PNVLRPDLTI…LAIRKPMGNA (178 aa)).

The protein belongs to the glycosyltransferase 85 family.

Its subcellular location is the cell membrane. It catalyses the reaction Adds an alpha-D-arabinofuranosyl group from trans,octacis-decaprenylphospho-beta-D-arabinofuranose at the 5-O-position of the eighth, tenth and twelfth galactofuranose unit of the galactofuranan chain of [beta-D-galactofuranosyl-(1-&gt;5)-beta-D-galactofuranosyl-(1-&gt;6)]14-beta-D-galactofuranosyl-(1-&gt;5)-beta-D-galactofuranosyl-(1-&gt;4)-alpha-L-rhamnopyranosyl-(1-&gt;3)-N-acetyl-alpha-D-glucosaminyl-diphospho-trans,octacis-decaprenol.. It functions in the pathway cell wall biogenesis; cell wall polysaccharide biosynthesis. Involved in the biosynthesis of the arabinogalactan (AG) region of the mycolylarabinogalactan-peptidoglycan (mAGP) complex, an essential component of the mycobacterial cell wall. Catalyzes the addition of the first key arabinofuranosyl (Araf) residue from the sugar donor decaprenyl-phospho-arabinose (DPA) on the C-5 of a 6-linked galactofuranosyl (Galf) of the galactan domain, thus 'priming' the galactan for further elaboration by other arabinofuranosyltransferases. This is Galactan 5-O-arabinofuranosyltransferase from Mycobacterium leprae (strain TN).